The sequence spans 270 residues: NAD kinase (270 aa).

Catalysis depends on Asp62, which acts as the Proton acceptor. Residues 62–63, Arg67, 129–130, Lys140, Asp159, Ile167, 170–175, Ala194, and Gln227 each bind NAD(+); these read DG, ND, and TSYSFS.

The protein belongs to the NAD kinase family. A divalent metal cation is required as a cofactor.

The protein resides in the cytoplasm. It catalyses the reaction NAD(+) + ATP = ADP + NADP(+) + H(+). Involved in the regulation of the intracellular balance of NAD and NADP, and is a key enzyme in the biosynthesis of NADP. Catalyzes specifically the phosphorylation on 2'-hydroxyl of the adenosine moiety of NAD to yield NADP. The protein is NAD kinase of Picrophilus torridus (strain ATCC 700027 / DSM 9790 / JCM 10055 / NBRC 100828 / KAW 2/3).